A 407-amino-acid polypeptide reads, in one-letter code: Phosphopentomutase (407 aa).

Mn(2+) is bound by residues Asp10, Asp306, His311, Asp347, His348, and His359.

It belongs to the phosphopentomutase family. Requires Mn(2+) as cofactor.

Its subcellular location is the cytoplasm. It carries out the reaction 2-deoxy-alpha-D-ribose 1-phosphate = 2-deoxy-D-ribose 5-phosphate. It catalyses the reaction alpha-D-ribose 1-phosphate = D-ribose 5-phosphate. It participates in carbohydrate degradation; 2-deoxy-D-ribose 1-phosphate degradation; D-glyceraldehyde 3-phosphate and acetaldehyde from 2-deoxy-alpha-D-ribose 1-phosphate: step 1/2. In terms of biological role, isomerase that catalyzes the conversion of deoxy-ribose 1-phosphate (dRib-1-P) and ribose 1-phosphate (Rib-1-P) to deoxy-ribose 5-phosphate (dRib-5-P) and ribose 5-phosphate (Rib-5-P), respectively. The polypeptide is Phosphopentomutase (Yersinia pseudotuberculosis serotype O:1b (strain IP 31758)).